The sequence spans 1378 residues: DNA-directed RNA polymerase subunit beta (1378 aa).

This sequence belongs to the RNA polymerase beta chain family. As to quaternary structure, the RNAP catalytic core consists of 2 alpha, 1 beta, 1 beta' and 1 omega subunit. When a sigma factor is associated with the core the holoenzyme is formed, which can initiate transcription.

It carries out the reaction RNA(n) + a ribonucleoside 5'-triphosphate = RNA(n+1) + diphosphate. In terms of biological role, DNA-dependent RNA polymerase catalyzes the transcription of DNA into RNA using the four ribonucleoside triphosphates as substrates. This is DNA-directed RNA polymerase subunit beta from Dinoroseobacter shibae (strain DSM 16493 / NCIMB 14021 / DFL 12).